The following is a 206-amino-acid chain: Phosphoribosyl-dephospho-CoA transferase (206 aa).

Residues Asp131 and Asp133 contribute to the active site.

This sequence belongs to the MdcG family.

The catalysed reaction is apo-[malonate decarboxylase ACP] + 2'-(5''-triphospho-alpha-D-ribosyl)-3'-dephospho-CoA = holo-[malonate decarboxylase ACP] + diphosphate. Its function is as follows. Transfers 2'-(5-triphosphoribosyl)-3'-dephosphocoenzyme-A to the apo-[acyl-carrier-protein] of the malonate decarboxylase to yield holo-[acyl-carrier-protein]. The polypeptide is Phosphoribosyl-dephospho-CoA transferase (Pseudomonas fluorescens (strain Pf0-1)).